The following is a 358-amino-acid chain: DNA replication and repair protein RecF (358 aa).

ATP is bound at residue 30–37 (GANGSGKT).

This sequence belongs to the RecF family.

It localises to the cytoplasm. The RecF protein is involved in DNA metabolism; it is required for DNA replication and normal SOS inducibility. RecF binds preferentially to single-stranded, linear DNA. It also seems to bind ATP. The protein is DNA replication and repair protein RecF of Acinetobacter baylyi (strain ATCC 33305 / BD413 / ADP1).